Here is a 357-residue protein sequence, read N- to C-terminus: Tetraacyldisaccharide 4'-kinase (357 aa).

Residue 49–56 participates in ATP binding; it reads TIGGTGKT.

This sequence belongs to the LpxK family.

It catalyses the reaction a lipid A disaccharide + ATP = a lipid IVA + ADP + H(+). The protein operates within glycolipid biosynthesis; lipid IV(A) biosynthesis; lipid IV(A) from (3R)-3-hydroxytetradecanoyl-[acyl-carrier-protein] and UDP-N-acetyl-alpha-D-glucosamine: step 6/6. Functionally, transfers the gamma-phosphate of ATP to the 4'-position of a tetraacyldisaccharide 1-phosphate intermediate (termed DS-1-P) to form tetraacyldisaccharide 1,4'-bis-phosphate (lipid IVA). The sequence is that of Tetraacyldisaccharide 4'-kinase from Porphyromonas gingivalis (strain ATCC 33277 / DSM 20709 / CIP 103683 / JCM 12257 / NCTC 11834 / 2561).